The chain runs to 772 residues: Phosphoribosylformylglycinamidine synthase subunit PurL (772 aa).

Residue H62 is part of the active site. ATP-binding residues include Y65 and K109. E111 contributes to the Mg(2+) binding site. Residues 112–115 and R134 each bind substrate; that span reads SHNH. H113 acts as the Proton acceptor in catalysis. D135 contributes to the Mg(2+) binding site. Q259 contributes to the substrate binding site. D287 contacts Mg(2+). 331 to 333 contributes to the substrate binding site; sequence ESQ. ATP-binding residues include D519 and G556. N557 serves as a coordination point for Mg(2+). A substrate-binding site is contributed by S559.

The protein belongs to the FGAMS family. Monomer. Part of the FGAM synthase complex composed of 1 PurL, 1 PurQ and 2 PurS subunits.

The protein localises to the cytoplasm. The catalysed reaction is N(2)-formyl-N(1)-(5-phospho-beta-D-ribosyl)glycinamide + L-glutamine + ATP + H2O = 2-formamido-N(1)-(5-O-phospho-beta-D-ribosyl)acetamidine + L-glutamate + ADP + phosphate + H(+). The protein operates within purine metabolism; IMP biosynthesis via de novo pathway; 5-amino-1-(5-phospho-D-ribosyl)imidazole from N(2)-formyl-N(1)-(5-phospho-D-ribosyl)glycinamide: step 1/2. Part of the phosphoribosylformylglycinamidine synthase complex involved in the purines biosynthetic pathway. Catalyzes the ATP-dependent conversion of formylglycinamide ribonucleotide (FGAR) and glutamine to yield formylglycinamidine ribonucleotide (FGAM) and glutamate. The FGAM synthase complex is composed of three subunits. PurQ produces an ammonia molecule by converting glutamine to glutamate. PurL transfers the ammonia molecule to FGAR to form FGAM in an ATP-dependent manner. PurS interacts with PurQ and PurL and is thought to assist in the transfer of the ammonia molecule from PurQ to PurL. This is Phosphoribosylformylglycinamidine synthase subunit PurL from Leifsonia xyli subsp. xyli (strain CTCB07).